A 566-amino-acid polypeptide reads, in one-letter code: Proline--tRNA ligase (566 aa).

This sequence belongs to the class-II aminoacyl-tRNA synthetase family. ProS type 1 subfamily. In terms of assembly, homodimer.

Its subcellular location is the cytoplasm. The enzyme catalyses tRNA(Pro) + L-proline + ATP = L-prolyl-tRNA(Pro) + AMP + diphosphate. Its function is as follows. Catalyzes the attachment of proline to tRNA(Pro) in a two-step reaction: proline is first activated by ATP to form Pro-AMP and then transferred to the acceptor end of tRNA(Pro). As ProRS can inadvertently accommodate and process non-cognate amino acids such as alanine and cysteine, to avoid such errors it has two additional distinct editing activities against alanine. One activity is designated as 'pretransfer' editing and involves the tRNA(Pro)-independent hydrolysis of activated Ala-AMP. The other activity is designated 'posttransfer' editing and involves deacylation of mischarged Ala-tRNA(Pro). The misacylated Cys-tRNA(Pro) is not edited by ProRS. The polypeptide is Proline--tRNA ligase (Bacillus cereus (strain G9842)).